We begin with the raw amino-acid sequence, 311 residues long: tRNA-cytidine(32) 2-sulfurtransferase (311 aa).

A PP-loop motif motif is present at residues 47–52; that stretch reads SGGKDS. Positions 122, 125, and 213 each coordinate [4Fe-4S] cluster.

This sequence belongs to the TtcA family. In terms of assembly, homodimer. Mg(2+) is required as a cofactor. The cofactor is [4Fe-4S] cluster.

The protein localises to the cytoplasm. The enzyme catalyses cytidine(32) in tRNA + S-sulfanyl-L-cysteinyl-[cysteine desulfurase] + AH2 + ATP = 2-thiocytidine(32) in tRNA + L-cysteinyl-[cysteine desulfurase] + A + AMP + diphosphate + H(+). Its pathway is tRNA modification. Its function is as follows. Catalyzes the ATP-dependent 2-thiolation of cytidine in position 32 of tRNA, to form 2-thiocytidine (s(2)C32). The sulfur atoms are provided by the cysteine/cysteine desulfurase (IscS) system. This chain is tRNA-cytidine(32) 2-sulfurtransferase, found in Escherichia coli O139:H28 (strain E24377A / ETEC).